The following is a 40-amino-acid chain: uncharacterized protein (40 aa).

This is an uncharacterized protein from Dictyostelium discoideum (Social amoeba).